The chain runs to 391 residues: Coproporphyrin III ferrochelatase (391 aa).

Ser79 and Tyr148 together coordinate Fe-coproporphyrin III. Fe(2+) contacts are provided by His211 and Glu305.

It belongs to the ferrochelatase family.

Its subcellular location is the cytoplasm. It carries out the reaction Fe-coproporphyrin III + 2 H(+) = coproporphyrin III + Fe(2+). It functions in the pathway porphyrin-containing compound metabolism; protoheme biosynthesis. Functionally, involved in coproporphyrin-dependent heme b biosynthesis. Catalyzes the insertion of ferrous iron into coproporphyrin III to form Fe-coproporphyrin III. This is Coproporphyrin III ferrochelatase from Tropheryma whipplei (strain TW08/27) (Whipple's bacillus).